The sequence spans 212 residues: GTP-binding protein EngB (212 aa).

Positions 36 to 212 constitute an EngB-type G domain; that stretch reads TAPEVAFAGR…LRAAVYDAII (177 aa). GTP-binding positions include 44–51, 71–75, 91–94, 158–161, and 192–194; these read GRSNVGKS, GRTQE, DMPG, TKSD, and TSS. Residues Ser51 and Thr73 each contribute to the Mg(2+) site.

It belongs to the TRAFAC class TrmE-Era-EngA-EngB-Septin-like GTPase superfamily. EngB GTPase family. Requires Mg(2+) as cofactor.

Necessary for normal cell division and for the maintenance of normal septation. This is GTP-binding protein EngB from Zymomonas mobilis subsp. mobilis (strain ATCC 31821 / ZM4 / CP4).